The following is a 184-amino-acid chain: Cytidylate kinase (184 aa).

8–16 (GQPGSGKTT) contributes to the ATP binding site.

It belongs to the cytidylate kinase family. Type 2 subfamily.

The protein resides in the cytoplasm. It carries out the reaction CMP + ATP = CDP + ADP. The catalysed reaction is dCMP + ATP = dCDP + ADP. The sequence is that of Cytidylate kinase from Pyrobaculum islandicum (strain DSM 4184 / JCM 9189 / GEO3).